A 306-amino-acid polypeptide reads, in one-letter code: Aspartate carbamoyltransferase catalytic subunit (306 aa).

Carbamoyl phosphate is bound by residues Arg55 and Thr56. L-aspartate is bound at residue Lys84. Carbamoyl phosphate contacts are provided by Arg105, His133, and Gln136. L-aspartate contacts are provided by Arg166 and Arg227. Residues Leu265 and Pro266 each contribute to the carbamoyl phosphate site.

It belongs to the aspartate/ornithine carbamoyltransferase superfamily. ATCase family. Heterododecamer (2C3:3R2) of six catalytic PyrB chains organized as two trimers (C3), and six regulatory PyrI chains organized as three dimers (R2).

The enzyme catalyses carbamoyl phosphate + L-aspartate = N-carbamoyl-L-aspartate + phosphate + H(+). It functions in the pathway pyrimidine metabolism; UMP biosynthesis via de novo pathway; (S)-dihydroorotate from bicarbonate: step 2/3. Its function is as follows. Catalyzes the condensation of carbamoyl phosphate and aspartate to form carbamoyl aspartate and inorganic phosphate, the committed step in the de novo pyrimidine nucleotide biosynthesis pathway. This Neisseria gonorrhoeae (strain ATCC 700825 / FA 1090) protein is Aspartate carbamoyltransferase catalytic subunit.